We begin with the raw amino-acid sequence, 569 residues long: Proline--tRNA ligase (569 aa).

It belongs to the class-II aminoacyl-tRNA synthetase family. ProS type 1 subfamily. As to quaternary structure, homodimer.

The protein localises to the cytoplasm. It carries out the reaction tRNA(Pro) + L-proline + ATP = L-prolyl-tRNA(Pro) + AMP + diphosphate. In terms of biological role, catalyzes the attachment of proline to tRNA(Pro) in a two-step reaction: proline is first activated by ATP to form Pro-AMP and then transferred to the acceptor end of tRNA(Pro). As ProRS can inadvertently accommodate and process non-cognate amino acids such as alanine and cysteine, to avoid such errors it has two additional distinct editing activities against alanine. One activity is designated as 'pretransfer' editing and involves the tRNA(Pro)-independent hydrolysis of activated Ala-AMP. The other activity is designated 'posttransfer' editing and involves deacylation of mischarged Ala-tRNA(Pro). The misacylated Cys-tRNA(Pro) is not edited by ProRS. The chain is Proline--tRNA ligase from Dehalococcoides mccartyi (strain ATCC BAA-2266 / KCTC 15142 / 195) (Dehalococcoides ethenogenes (strain 195)).